A 254-amino-acid chain; its full sequence is 3-deoxy-manno-octulosonate cytidylyltransferase (254 aa).

Belongs to the KdsB family.

The protein localises to the cytoplasm. It carries out the reaction 3-deoxy-alpha-D-manno-oct-2-ulosonate + CTP = CMP-3-deoxy-beta-D-manno-octulosonate + diphosphate. Its pathway is nucleotide-sugar biosynthesis; CMP-3-deoxy-D-manno-octulosonate biosynthesis; CMP-3-deoxy-D-manno-octulosonate from 3-deoxy-D-manno-octulosonate and CTP: step 1/1. It functions in the pathway bacterial outer membrane biogenesis; lipopolysaccharide biosynthesis. Activates KDO (a required 8-carbon sugar) for incorporation into bacterial lipopolysaccharide in Gram-negative bacteria. In Bordetella pertussis (strain Tohama I / ATCC BAA-589 / NCTC 13251), this protein is 3-deoxy-manno-octulosonate cytidylyltransferase.